Reading from the N-terminus, the 121-residue chain is Cell division protein FtsB (121 aa).

Residues 1–6 (MRNWRW) lie on the Cytoplasmic side of the membrane. Residues 7-24 (LLLVLAVLLAWLQYRFWF) form a helical membrane-spanning segment. Topologically, residues 25–121 (GPGNSGEVMM…PASTDPVDHP (97 aa)) are periplasmic. The stretch at 31-66 (EVMMLEAQVAHQTQDNEGLRQRNQALAAEVKDLKDG) forms a coiled coil. The segment at 94 to 121 (APLPAPASPETAAPAQQAPASTDPVDHP) is disordered. The span at 101–121 (SPETAAPAQQAPASTDPVDHP) shows a compositional bias: low complexity.

Belongs to the FtsB family. In terms of assembly, part of a complex composed of FtsB, FtsL and FtsQ.

Its subcellular location is the cell inner membrane. In terms of biological role, essential cell division protein. May link together the upstream cell division proteins, which are predominantly cytoplasmic, with the downstream cell division proteins, which are predominantly periplasmic. The polypeptide is Cell division protein FtsB (Xanthomonas oryzae pv. oryzae (strain MAFF 311018)).